The chain runs to 324 residues: tRNA pseudouridine synthase B (324 aa).

H43 is a binding site for substrate. D48 functions as the Nucleophile in the catalytic mechanism. Residues Y76, Y179, and L200 each coordinate substrate.

The protein belongs to the pseudouridine synthase TruB family. Type 1 subfamily.

The catalysed reaction is uridine(55) in tRNA = pseudouridine(55) in tRNA. Its function is as follows. Responsible for synthesis of pseudouridine from uracil-55 in the psi GC loop of transfer RNAs. In Yersinia pestis bv. Antiqua (strain Nepal516), this protein is tRNA pseudouridine synthase B.